Here is a 264-residue protein sequence, read N- to C-terminus: Ribosomal RNA small subunit methyltransferase A (264 aa).

S-adenosyl-L-methionine contacts are provided by N12, L14, G39, E60, D83, and N103.

This sequence belongs to the class I-like SAM-binding methyltransferase superfamily. rRNA adenine N(6)-methyltransferase family. RsmA subfamily.

The protein resides in the cytoplasm. It catalyses the reaction adenosine(1518)/adenosine(1519) in 16S rRNA + 4 S-adenosyl-L-methionine = N(6)-dimethyladenosine(1518)/N(6)-dimethyladenosine(1519) in 16S rRNA + 4 S-adenosyl-L-homocysteine + 4 H(+). In terms of biological role, specifically dimethylates two adjacent adenosines (A1518 and A1519) in the loop of a conserved hairpin near the 3'-end of 16S rRNA in the 30S particle. May play a critical role in biogenesis of 30S subunits. The sequence is that of Ribosomal RNA small subunit methyltransferase A from Syntrophotalea carbinolica (strain DSM 2380 / NBRC 103641 / GraBd1) (Pelobacter carbinolicus).